The primary structure comprises 181 residues: MRIDKNLPNYLTIARIMVIPVIILLFYINNSLARKLGALLFVLASITDFFDGYIARKYNLVTSFGKMFDPIADKLLVGCVTIMLLKKDNVDEIPCLLILAREFLVSGLREFLALVKVSVPVSRLAKLKTFLQMFALSILILGSKGSGIIYLDIVGEIILWIAAFLTIITGYSYFKACKTYF.

Helical transmembrane passes span 8–28, 35–55, 64–84, and 148–168; these read PNYL…LFYI, KLGA…GYIA, FGKM…TIML, and IIYL…LTII.

The protein belongs to the CDP-alcohol phosphatidyltransferase class-I family.

It is found in the cell membrane. It carries out the reaction a CDP-1,2-diacyl-sn-glycerol + sn-glycerol 3-phosphate = a 1,2-diacyl-sn-glycero-3-phospho-(1'-sn-glycero-3'-phosphate) + CMP + H(+). It participates in phospholipid metabolism; phosphatidylglycerol biosynthesis; phosphatidylglycerol from CDP-diacylglycerol: step 1/2. This protein catalyzes the committed step to the synthesis of the acidic phospholipids. The protein is CDP-diacylglycerol--glycerol-3-phosphate 3-phosphatidyltransferase (pgsA) of Rickettsia prowazekii (strain Madrid E).